Here is a 470-residue protein sequence, read N- to C-terminus: Histone deacetylase HOS1 (470 aa).

Positions 47–392 (LTFPYARKDD…YTYLTWCVTK (346 aa)) are histone deacetylase. The residue at position 110 (Ser110) is a Phosphoserine. His211 is a catalytic residue.

It belongs to the histone deacetylase family. HD type 1 subfamily.

The protein localises to the nucleus. It carries out the reaction N(6)-acetyl-L-lysyl-[histone] + H2O = L-lysyl-[histone] + acetate. Its function is as follows. Responsible for the deacetylation of lysine residues on the N-terminal part of the core histones (H2A, H2B, H3 and H4). Histone deacetylation plays an important role in transcriptional regulation, cell cycle progression and developmental events. Histone deacetylases act via the formation of large multiprotein complexes. The protein is Histone deacetylase HOS1 (HOS1) of Saccharomyces cerevisiae (strain ATCC 204508 / S288c) (Baker's yeast).